Here is a 765-residue protein sequence, read N- to C-terminus: MEETKTHELEVEAESGSRMEKVYIAVGNDVQEGYKTIHWALKKWNNIPISIVLLHLCNISQDFVYTPFGKLPASSVSEEKLQVLRKYEDQKIDKLLSKYITFCGKVCPLSVNFVLFGKSKSAISGSFYVYQNKPEFCEFYIICGGKMVSLKNDVNNNNSNIRSWIGKMFHDPGRNLDRSSGNNDDPTASGSSWDKNLQEIENYFQQLLSLNLAEEETENVVEEEQEDDDDVALNVLQHMDVAEKLEYVRRKVNEAKLMIDEKSREVKVNAERSNRAEWAISLCNSRIGEFEAWIKEESERREKLQATLDSDKECIEEAKNYVEKGKTKLHSLAELQEVLSSKVKTMMEAKSQAEVELERVVLQRGEMITEIEKLRSQRDVFNRRIEFCKEREVIGSVSKEEVKCGYREYVAEDIRLATETYSDRLRLKSGGNWTNVYRGRIKHTTVAVKVIGDSLSDEAFGAKVKLLNEIRHPNLVAIAGFCSQRPKCLLFEYMHNGNLRDNLFTSQRKSRRSKILKWHDRIRIAHQVCSGLGFLHSVKPKPIVHGRLTPSKILLDRNLVPKITGFGLIMHSDQSDTKPDVMAFGVLLLHLLTGRNWHGLLKAMSMNQTSILRDLDQTAGKWPLELAKEFGALAVKCSSVNRGGNMDFSTKEIMEELGKIREKADEFKTKGGYEEATNSNMDEGDPNDIPSVFMCPILQEVMKNPHVAADGFSYELEAIQEWLSMGHDTSPMTNLRLDYQMLTPNHTLRSLIQDWHSKRAAQASS.

Residues 198 to 391 adopt a coiled-coil conformation; sequence QEIENYFQQL…NRRIEFCKER (194 aa). Residues 422–765 form the Protein kinase domain; that stretch reads SDRLRLKSGG…HSKRAAQASS (344 aa). ATP-binding positions include 428 to 436 and Lys-449; that span reads KSGGNWTNV. Residues 688–762 form the U-box domain; that stretch reads DIPSVFMCPI…QDWHSKRAAQ (75 aa).

This sequence belongs to the protein kinase superfamily. Ser/Thr protein kinase family.

It catalyses the reaction S-ubiquitinyl-[E2 ubiquitin-conjugating enzyme]-L-cysteine + [acceptor protein]-L-lysine = [E2 ubiquitin-conjugating enzyme]-L-cysteine + N(6)-ubiquitinyl-[acceptor protein]-L-lysine.. Its pathway is protein modification; protein ubiquitination. In terms of biological role, functions as an E3 ubiquitin ligase. In Arabidopsis thaliana (Mouse-ear cress), this protein is Putative U-box domain-containing protein 50 (PUB50).